The following is a 142-amino-acid chain: Hemoglobin subunit alpha (142 aa).

The Globin domain maps to 2-142 (VLSPADKSNV…VSTVLTSKYR (141 aa)). Phosphoserine is present on serine 4. N6-succinyllysine occurs at positions 8 and 12. Residue lysine 17 is modified to N6-acetyllysine; alternate. Position 17 is an N6-succinyllysine; alternate (lysine 17). Tyrosine 25 is subject to Phosphotyrosine. Serine 36 is modified (phosphoserine). Lysine 41 carries the N6-succinyllysine modification. Serine 50 carries the post-translational modification Phosphoserine. Histidine 59 contributes to the O2 binding site. Histidine 88 lines the heme b pocket. Residue serine 103 is modified to Phosphoserine. Threonine 109 carries the post-translational modification Phosphothreonine. Phosphoserine is present on serine 125. Threonine 135 and threonine 138 each carry phosphothreonine. A Phosphoserine modification is found at serine 139.

This sequence belongs to the globin family. Heterotetramer of two alpha chains and two beta chains. Red blood cells.

Involved in oxygen transport from the lung to the various peripheral tissues. Its function is as follows. Hemopressin acts as an antagonist peptide of the cannabinoid receptor CNR1. Hemopressin-binding efficiently blocks cannabinoid receptor CNR1 and subsequent signaling. The chain is Hemoglobin subunit alpha (HBA) from Ursus maritimus (Polar bear).